A 259-amino-acid chain; its full sequence is Thiazole synthase (259 aa).

The active-site Schiff-base intermediate with DXP is Lys102. Residues Gly163, 189-190 (AG), and 211-212 (NT) contribute to the 1-deoxy-D-xylulose 5-phosphate site.

The protein belongs to the ThiG family. Homotetramer. Forms heterodimers with either ThiH or ThiS.

The protein resides in the cytoplasm. It carries out the reaction [ThiS sulfur-carrier protein]-C-terminal-Gly-aminoethanethioate + 2-iminoacetate + 1-deoxy-D-xylulose 5-phosphate = [ThiS sulfur-carrier protein]-C-terminal Gly-Gly + 2-[(2R,5Z)-2-carboxy-4-methylthiazol-5(2H)-ylidene]ethyl phosphate + 2 H2O + H(+). Its pathway is cofactor biosynthesis; thiamine diphosphate biosynthesis. In terms of biological role, catalyzes the rearrangement of 1-deoxy-D-xylulose 5-phosphate (DXP) to produce the thiazole phosphate moiety of thiamine. Sulfur is provided by the thiocarboxylate moiety of the carrier protein ThiS. In vitro, sulfur can be provided by H(2)S. The polypeptide is Thiazole synthase (Novosphingobium aromaticivorans (strain ATCC 700278 / DSM 12444 / CCUG 56034 / CIP 105152 / NBRC 16084 / F199)).